Reading from the N-terminus, the 393-residue chain is MKKIVLAYSGGLDTSVILKWLQENYNCEVVVFTADLGQDDDMSVIRQKATALNVKEIFIEDLKEEFVKDFVFPMFRANTVYEGYYLLGTSIARPLIAKRQIEIAKLTGADTVAHGATGKGNDQIRFEFGYYCCNPNIKVIAPWRQWKLTSRNSLIEYAKKHGINVPLDKSSEPPYSIDANLLHTSYEGKSLEDPYVEPDYTILSKSVTPELASDTPEYIEISFEKGDPCAINNIPLSPANLLKQLNTIGGKHGIGIIDIVENRYVGIKSRGIYETPGGTILLHAHRAIESITLDREAAHLKDEIMPKYAKLIYNGYWWTTERKMLQALIDRSQEKVNGVVRLKLYKGSVIVVGRKSENSLYSHNLASFDLSEDYNHTDAEGFIKINSLRLRNC.

ATP-binding positions include 7 to 15 (AYSGGLDTS) and Ala-34. Positions 85 and 90 each coordinate L-citrulline. Gly-115 serves as a coordination point for ATP. L-aspartate contacts are provided by Thr-117, Asn-121, and Asp-122. Asn-121 serves as a coordination point for L-citrulline. L-citrulline-binding residues include Arg-125, Ser-176, Ser-185, Glu-261, and Tyr-273.

This sequence belongs to the argininosuccinate synthase family. Type 1 subfamily. Homotetramer.

It localises to the cytoplasm. The catalysed reaction is L-citrulline + L-aspartate + ATP = 2-(N(omega)-L-arginino)succinate + AMP + diphosphate + H(+). Its pathway is amino-acid biosynthesis; L-arginine biosynthesis; L-arginine from L-ornithine and carbamoyl phosphate: step 2/3. The polypeptide is Argininosuccinate synthase (Ehrlichia canis (strain Jake)).